The sequence spans 1059 residues: Zinc finger protein 628 (1059 aa).

C2H2-type zinc fingers lie at residues 36–58 (YECG…QRTH), 64–86 (YKCP…QRGH), 92–114 (YQCP…RSVH), 120–142 (FICG…LRQH), 148–170 (YPCP…RHVH), and 176–198 (YTCG…QRVH). T199 is subject to Phosphothreonine. The C2H2-type 7 zinc-finger motif lies at 204-226 (FRCPLCPKTFTHSSNLLLHQRTH). Disordered regions lie at residues 226–247 (HGAA…REPG), 260–280 (LQPH…PVVP), and 312–351 (EHQP…PAAA). The span at 228-237 (AAPAPGTASA) shows a compositional bias: low complexity. Pro residues predominate over residues 263 to 279 (HSPPAPPAPPPPPPPVV). Residues 323-335 (PQPQEAPAEAPKA) show a composition bias toward low complexity. Over residues 336–351 (DQPPSPLPQPPPPAAA) the composition is skewed to pro residues. 7 consecutive C2H2-type zinc fingers follow at residues 356 to 378 (FACL…QHSH), 386 to 408 (FRCG…QQCH), 454 to 476 (YKCA…LRDH), 482 to 504 (YQCG…QRVH), 510 to 532 (FTCG…LRLH), 538 to 560 (YACG…RHVH), and 566 to 588 (HACG…QRVH). Residue T589 is modified to Phosphothreonine. 2 C2H2-type zinc fingers span residues 594–616 (FRCP…QRTH) and 622–644 (FTCP…LRTH). Residues 644 to 658 (HAPANTPPSTTAPAA) show a composition bias toward low complexity. The disordered stretch occupies residues 644–674 (HAPANTPPSTTAPAAGPQPPAPLAAARAPPA). 4 consecutive repeat copies span residues 818-831 (VQLQ…EVTT), 832-842 (VQLQPAQEVTT), 843-853 (VQLQPAQEVTT), and 854-864 (VQLQPAQEVTT). Positions 818-864 (VQLQPLRPAPEVTTVQLQPAQEVTTVQLQPAQEVTTVQLQPAQEVTT) are 4 X approximate tandem repeats. The tract at residues 943 to 1059 (DGEQTRLCVQ…LPAVQLVHTF (117 aa)) is interaction with TAF4B.

Interacts with TAF4B.

It localises to the nucleus. Its function is as follows. Transcriptional activator. Binds DNA on GT-box consensus sequence 5'-TTGGTT-3'. Plays a role in spermiogenesis. The chain is Zinc finger protein 628 (ZNF628) from Homo sapiens (Human).